The primary structure comprises 271 residues: tRNA (guanine-N(7)-)-methyltransferase (271 aa).

The tract at residues 1-52 (MSDSHHTPEAASASLRHVRAKGEPRFPDGPKADPAGSHFERRIRSFQPRRSR) is disordered. The segment covering 20 to 31 (AKGEPRFPDGPK) has biased composition (basic and acidic residues). The S-adenosyl-L-methionine site is built by Glu93, Asp118, Asp145, and Asp168. Asp168 is a catalytic residue. Substrate contacts are provided by residues Lys172, Asp204, and 241–244 (TRFE).

Belongs to the class I-like SAM-binding methyltransferase superfamily. TrmB family.

It carries out the reaction guanosine(46) in tRNA + S-adenosyl-L-methionine = N(7)-methylguanosine(46) in tRNA + S-adenosyl-L-homocysteine. It functions in the pathway tRNA modification; N(7)-methylguanine-tRNA biosynthesis. Functionally, catalyzes the formation of N(7)-methylguanine at position 46 (m7G46) in tRNA. This Streptomyces coelicolor (strain ATCC BAA-471 / A3(2) / M145) protein is tRNA (guanine-N(7)-)-methyltransferase.